We begin with the raw amino-acid sequence, 319 residues long: D-ribose/D-allose-binding protein (319 aa).

The N-terminal stretch at 1 to 29 (MKRVASRRLLAAVVLTACSSFLPLSAVHA) is a signal peptide.

It belongs to the bacterial solute-binding protein 2 family.

It is found in the periplasm. Functionally, binds specifically both D-ribose and D-allose, with affinities in the lower micromolar range. This chain is D-ribose/D-allose-binding protein, found in Pseudomonas aeruginosa (strain ATCC 15692 / DSM 22644 / CIP 104116 / JCM 14847 / LMG 12228 / 1C / PRS 101 / PAO1).